The chain runs to 108 residues: MIKGNMGDLMKQAQKIQEQMQKAQEELANAEVSGESGGGLIKIVMNGRHDVKKVEIDASLMQEEKEILEDLLAAAVNDAVRKVEKNNQDKMSNMTAGLGIPPNFKMPF.

The protein belongs to the YbaB/EbfC family. In terms of assembly, homodimer.

It is found in the cytoplasm. It localises to the nucleoid. Its function is as follows. Binds to DNA and alters its conformation. May be involved in regulation of gene expression, nucleoid organization and DNA protection. The chain is Nucleoid-associated protein HCH_02614 from Hahella chejuensis (strain KCTC 2396).